The primary structure comprises 415 residues: Multidrug resistance protein MdtA (415 aa).

A signal peptide spans 1 to 21; sequence MKGSYKSRWVIVIVVVIAAIA. The segment covering 31–46 has biased composition (polar residues); it reads DSQSAAPGATKQAQQS. Disordered regions lie at residues 31–56 and 392–415; these read DSQS…GMRA and EAQS…GARS. Over residues 399-415 the composition is skewed to basic and acidic residues; that stretch reads PEEKATSREYAKKGARS.

Belongs to the membrane fusion protein (MFP) (TC 8.A.1) family. Part of a tripartite efflux system composed of MdtA, MdtB and MdtC.

The protein resides in the cell inner membrane. Functionally, the MdtABC tripartite complex confers resistance against novobiocin and deoxycholate. This Escherichia coli O6:K15:H31 (strain 536 / UPEC) protein is Multidrug resistance protein MdtA.